The following is a 335-amino-acid chain: Phosphate acyltransferase (335 aa).

Belongs to the PlsX family. Homodimer. Probably interacts with PlsY.

The protein localises to the cytoplasm. The enzyme catalyses a fatty acyl-[ACP] + phosphate = an acyl phosphate + holo-[ACP]. Its pathway is lipid metabolism; phospholipid metabolism. Its function is as follows. Catalyzes the reversible formation of acyl-phosphate (acyl-PO(4)) from acyl-[acyl-carrier-protein] (acyl-ACP). This enzyme utilizes acyl-ACP as fatty acyl donor, but not acyl-CoA. In Clostridium botulinum (strain Langeland / NCTC 10281 / Type F), this protein is Phosphate acyltransferase.